The primary structure comprises 637 residues: MIEVGETMGELPTNKIVFCERSWKTPVSILAFLIFVTFAWGIYLLDHYDEDDNFHGADDLSVGQFLVRNIAMPHVQRLYHTVPPAVVGVGGGGVNAGPVASGAIVGTNGYVITTLHSVSKLPEISVQVATTGGIRRFPAQVVKTIPGHDLALLKMQTTEKFLHFRMADVQTVVPGQQVFAFGRNMAGAPLVRQGLVQSADAPLAVGATQITHLLRSDAVYSWEQTGGPLVNAQGDLVGINIAATGPTGKVEGFTVPAQVIVSHLQDVVRFKKGSATAPGQPQTQTVAAGSTNWWSKARAVVGGPTAIPGMGMNVVQGNVVKGNVAPSIPSGMPFIDTDHVGGAKIGGYSVADIVGLVMLALAAGVTGGMMTMGGGVLQVAGMMVFFGYGMYLIRPVVFLTNVVVYGAASLRNDKAQLVQWDKVKPLIPWGIAGVILGYFIGNAIGDSVVGILLGLFALIMAGKAVMEILQPNAGEETAESISATEAEDEMDELMALADGTSRPKASGLALPEGHARSAVLGLPMGLFSGILGISGGVIEVPLQRYVGRISLQNAIANSSVLVFWASVAGSVVAFLHGSSTGLIHWEAPVTLALVMIPGAYVGGIIGARLMRVLPVRVLKGVYAATMAAIALKMLTSV.

The Cytoplasmic portion of the chain corresponds to Met1–Lys24. Residues Thr25 to Leu45 traverse the membrane as a helical segment. The Lumenal segment spans residues Asp46 to Asp352. The tract at residues Leu78–Val268 is protease-like. The a divalent metal cation site is built by His148 and His263. The helical transmembrane segment at Ile353–Gly373 threads the bilayer. Residues Met370–Val637 form a TSUP-like region. Topologically, residues Gly374–Gln378 are cytoplasmic. Residues Val379–Leu399 traverse the membrane as a helical segment. The Lumenal segment spans residues Thr400–Gln416. Residues Leu417–Gly437 form a helical membrane-spanning segment. Position 438 (Tyr438) is a topological domain, cytoplasmic. Residues Phe439 to Ile459 form a helical membrane-spanning segment. Over Met460–Ser517 the chain is Lumenal. Residues Ala518 to Ile538 traverse the membrane as a helical segment. At Glu539–Ala554 the chain is on the cytoplasmic side. A helical membrane pass occupies residues Ile555–Leu575. The Lumenal segment spans residues His576–Glu586. The helical transmembrane segment at Ala587–Ala607 threads the bilayer. Residues Arg608–Arg616 lie on the Cytoplasmic side of the membrane. Residues Val617–Val637 traverse the membrane as a helical segment.

In the N-terminal section; belongs to the peptidase S1C family. This sequence in the C-terminal section; belongs to the 4-toluene sulfonate uptake permease (TSUP) (TC 2.A.102) family. Requires a metal cation as cofactor. In terms of processing, subject to proteolytic cleavage by MamE.

It is found in the magnetosome membrane. Plays 2 roles; promotes magnetite nucleation/formation and activates the MamE protease. Despite its near conservation of a protease-like sequence, this is probably not a protease. Required in conjunction with MamP for proteolysis of at least MamE, itself and MamP. May transport a solute that controls MamE's protease activity. May place individual iron atoms into the magnetite lattice. In Paramagnetospirillum magneticum (strain ATCC 700264 / AMB-1) (Magnetospirillum magneticum), this protein is Probable membrane transporter protein MamO (mamO).